Reading from the N-terminus, the 130-residue chain is Small ribosomal subunit protein uS8B (130 aa).

Belongs to the universal ribosomal protein uS8 family.

This Drosophila melanogaster (Fruit fly) protein is Small ribosomal subunit protein uS8B (RpS15Ab).